Consider the following 486-residue polypeptide: NADH-quinone oxidoreductase subunit N (486 aa).

Transmembrane regions (helical) follow at residues Ala-11 to Val-31, Met-44 to Leu-64, Pro-74 to Ala-94, Phe-103 to Val-123, Met-128 to Leu-148, Phe-163 to Gly-183, Val-206 to Phe-226, Pro-238 to Ile-258, Pro-267 to Gly-287, Met-300 to Thr-320, Met-328 to Leu-348, Tyr-371 to Phe-391, Val-404 to Tyr-424, and Leu-452 to Tyr-472.

This sequence belongs to the complex I subunit 2 family. As to quaternary structure, NDH-1 is composed of 14 different subunits. Subunits NuoA, H, J, K, L, M, N constitute the membrane sector of the complex.

The protein localises to the cell inner membrane. The enzyme catalyses a quinone + NADH + 5 H(+)(in) = a quinol + NAD(+) + 4 H(+)(out). In terms of biological role, NDH-1 shuttles electrons from NADH, via FMN and iron-sulfur (Fe-S) centers, to quinones in the respiratory chain. The immediate electron acceptor for the enzyme in this species is believed to be ubiquinone. Couples the redox reaction to proton translocation (for every two electrons transferred, four hydrogen ions are translocated across the cytoplasmic membrane), and thus conserves the redox energy in a proton gradient. The protein is NADH-quinone oxidoreductase subunit N of Laribacter hongkongensis (strain HLHK9).